The chain runs to 252 residues: 2-succinyl-6-hydroxy-2,4-cyclohexadiene-1-carboxylate synthase (252 aa).

It belongs to the AB hydrolase superfamily. MenH family. Monomer.

The enzyme catalyses 5-enolpyruvoyl-6-hydroxy-2-succinyl-cyclohex-3-ene-1-carboxylate = (1R,6R)-6-hydroxy-2-succinyl-cyclohexa-2,4-diene-1-carboxylate + pyruvate. It participates in quinol/quinone metabolism; 1,4-dihydroxy-2-naphthoate biosynthesis; 1,4-dihydroxy-2-naphthoate from chorismate: step 3/7. Its pathway is quinol/quinone metabolism; menaquinone biosynthesis. Functionally, catalyzes a proton abstraction reaction that results in 2,5-elimination of pyruvate from 2-succinyl-5-enolpyruvyl-6-hydroxy-3-cyclohexene-1-carboxylate (SEPHCHC) and the formation of 2-succinyl-6-hydroxy-2,4-cyclohexadiene-1-carboxylate (SHCHC). This chain is 2-succinyl-6-hydroxy-2,4-cyclohexadiene-1-carboxylate synthase, found in Escherichia coli O7:K1 (strain IAI39 / ExPEC).